The primary structure comprises 390 residues: Putative nickel insertion protein (390 aa).

It belongs to the LarC family.

The sequence is that of Putative nickel insertion protein from Myxococcus xanthus (strain DK1622).